The primary structure comprises 269 residues: Subtilisin BL (269 aa).

A Ca(2+)-binding site is contributed by Q2. The region spanning 5–268 is the Peptidase S8 domain; that stretch reads PWGISRVQAP…SGLVNAEAAT (264 aa). D32 acts as the Charge relay system in catalysis. Position 40 (D40) interacts with Ca(2+). The Charge relay system role is filled by H62. Residues L73, N75, I77, V79, A163, Y165, and A168 each coordinate Ca(2+). S215 acts as the Charge relay system in catalysis.

The protein belongs to the peptidase S8 family. The cofactor is Ca(2+).

It is found in the secreted. It catalyses the reaction Hydrolysis of proteins with broad specificity for peptide bonds, and a preference for a large uncharged residue in P1. Hydrolyzes peptide amides.. Functionally, subtilisin is an extracellular alkaline serine protease, it catalyzes the hydrolysis of proteins and peptide amides. This Lederbergia lenta (Bacillus lentus) protein is Subtilisin BL.